The chain runs to 551 residues: Serendipity locus protein alpha (551 aa).

The protein resides in the cytoplasm. Its subcellular location is the cell membrane. Its function is as follows. Required for the cellularization of the syncytial blastoderm embryo. Involved in the localization of the actin filaments just prior to and during plasma membrane invagination. Sry-alpha together with nullo and bnk may provide auxiliary functions, by acting both to stabilize a large and dynamic microfilament structure and regulate its functions. The protein is Serendipity locus protein alpha (Sry-alpha) of Drosophila pseudoobscura pseudoobscura (Fruit fly).